A 305-amino-acid chain; its full sequence is Probable lipid kinase YegS-like (305 aa).

A DAGKc domain is found at 1 to 129 (MTQRRAMLIL…VDLGEVGGKL (129 aa)). Residues threonine 39, 65–71 (GDGTLRD), and threonine 92 contribute to the ATP site. Mg(2+)-binding residues include leucine 210, aspartate 213, and leucine 215. Glutamate 268 functions as the Proton acceptor in the catalytic mechanism.

It belongs to the diacylglycerol/lipid kinase family. YegS lipid kinase subfamily. Requires Mg(2+) as cofactor. Ca(2+) serves as cofactor.

The protein resides in the cytoplasm. In terms of biological role, probably phosphorylates lipids; the in vivo substrate is unknown. The protein is Probable lipid kinase YegS-like of Pseudomonas syringae pv. tomato (strain ATCC BAA-871 / DC3000).